A 395-amino-acid chain; its full sequence is MATPSLRSHEIPAHSQEAGNKSISSGSRRGLLWHLRARQSRVGLFEVGPGHELHRMTRMMQEGLWAATQVSKNNPPTGPTTQKDYLEVMTQVHEEGFELGTLAGPAFARLRKSIGLTEEDYQATLGPGDPYLQFFSTSKSKASFFLTHDQRFFVKTQRRHEVHVLLAHLPRYVEHLQQYPHSLLARLLGVYSLRVAQGKKKYFIIMQCIFYPTSRISERYDIKGCNISRWVDPAPEGSPLVLVLKDLNFQEKTMRLGAQRSWFLRQMELDTAFLREVNVLDYSLLVAIQFLHEDEKGIHHSVFSTFKSIQGVSKSKGTGDQNCRMLPDLPNALHILDGPDQRYFLGLVDMTTVYGFRKRLEHVWKMVRYPGQSVSTVSPAHYARRLCRWAEVHTE.

Residues 1-25 (MATPSLRSHEIPAHSQEAGNKSISS) are disordered. Residues 37-394 (ARQSRVGLFE…RLCRWAEVHT (358 aa)) form the PIPK domain.

Interacts with type I phosphatidylinositol 4-phosphate 5-kinases, including PIP5K1A and PIP5K1B. As to expression, highly expressed in brain and testis, relatively to heart, spleen, lung, liver, skeletal muscle and kidney.

It is found in the cytoplasm. It localises to the membrane. Functionally, may act as a scaffold to localize and regulate type I phosphatidylinositol 4-phosphate 5-kinases to specific compartments within the cell, where they generate PI(4,5)P2 for actin nucleation, signaling and scaffold protein recruitment and conversion to PI(3,4,5)P3. The protein is Phosphatidylinositol 4-phosphate 5-kinase-like protein 1 (Pip5kl1) of Mus musculus (Mouse).